A 394-amino-acid polypeptide reads, in one-letter code: NAD(P)H-quinone oxidoreductase subunit H (394 aa).

It belongs to the complex I 49 kDa subunit family. As to quaternary structure, NDH-1 can be composed of about 15 different subunits; different subcomplexes with different compositions have been identified which probably have different functions.

Its subcellular location is the cellular thylakoid membrane. It catalyses the reaction a plastoquinone + NADH + (n+1) H(+)(in) = a plastoquinol + NAD(+) + n H(+)(out). It carries out the reaction a plastoquinone + NADPH + (n+1) H(+)(in) = a plastoquinol + NADP(+) + n H(+)(out). Functionally, NDH-1 shuttles electrons from an unknown electron donor, via FMN and iron-sulfur (Fe-S) centers, to quinones in the respiratory and/or the photosynthetic chain. The immediate electron acceptor for the enzyme in this species is believed to be plastoquinone. Couples the redox reaction to proton translocation, and thus conserves the redox energy in a proton gradient. Cyanobacterial NDH-1 also plays a role in inorganic carbon-concentration. In Trichormus variabilis (strain ATCC 29413 / PCC 7937) (Anabaena variabilis), this protein is NAD(P)H-quinone oxidoreductase subunit H.